The following is a 269-amino-acid chain: Small ribosomal subunit protein eS1 (269 aa).

Disordered regions lie at residues 1–20 (MAVG…SKKK) and 249–269 (AASG…QESV).

Belongs to the eukaryotic ribosomal protein eS1 family. In terms of assembly, component of the small ribosomal subunit. Mature ribosomes consist of a small (40S) and a large (60S) subunit. The 40S subunit contains about 33 different proteins and 1 molecule of RNA (18S). The 60S subunit contains about 49 different proteins and 3 molecules of RNA (28S, 5.8S and 5S).

It is found in the cytoplasm. The polypeptide is Small ribosomal subunit protein eS1 (Anopheles darlingi (Mosquito)).